The following is a 452-amino-acid chain: Bifunctional protein GlmU (452 aa).

Positions M1–R226 are pyrophosphorylase. Residues L8 to G11, K22, Q73, G78 to T79, Y100 to D102, G137, E151, N166, and N224 contribute to the UDP-N-acetyl-alpha-D-glucosamine site. D102 is a Mg(2+) binding site. N224 is a binding site for Mg(2+). A linker region spans residues I227–N247. Residues G248–K452 form an N-acetyltransferase region. Residues R330 and K348 each contribute to the UDP-N-acetyl-alpha-D-glucosamine site. The active-site Proton acceptor is the H360. Positions 363 and 374 each coordinate UDP-N-acetyl-alpha-D-glucosamine. Residues A377, N383 to Y384, S402, A420, and R437 contribute to the acetyl-CoA site.

The protein in the N-terminal section; belongs to the N-acetylglucosamine-1-phosphate uridyltransferase family. It in the C-terminal section; belongs to the transferase hexapeptide repeat family. In terms of assembly, homotrimer. The cofactor is Mg(2+).

It is found in the cytoplasm. It catalyses the reaction alpha-D-glucosamine 1-phosphate + acetyl-CoA = N-acetyl-alpha-D-glucosamine 1-phosphate + CoA + H(+). The enzyme catalyses N-acetyl-alpha-D-glucosamine 1-phosphate + UTP + H(+) = UDP-N-acetyl-alpha-D-glucosamine + diphosphate. It participates in nucleotide-sugar biosynthesis; UDP-N-acetyl-alpha-D-glucosamine biosynthesis; N-acetyl-alpha-D-glucosamine 1-phosphate from alpha-D-glucosamine 6-phosphate (route II): step 2/2. It functions in the pathway nucleotide-sugar biosynthesis; UDP-N-acetyl-alpha-D-glucosamine biosynthesis; UDP-N-acetyl-alpha-D-glucosamine from N-acetyl-alpha-D-glucosamine 1-phosphate: step 1/1. Its pathway is bacterial outer membrane biogenesis; LPS lipid A biosynthesis. Functionally, catalyzes the last two sequential reactions in the de novo biosynthetic pathway for UDP-N-acetylglucosamine (UDP-GlcNAc). The C-terminal domain catalyzes the transfer of acetyl group from acetyl coenzyme A to glucosamine-1-phosphate (GlcN-1-P) to produce N-acetylglucosamine-1-phosphate (GlcNAc-1-P), which is converted into UDP-GlcNAc by the transfer of uridine 5-monophosphate (from uridine 5-triphosphate), a reaction catalyzed by the N-terminal domain. The chain is Bifunctional protein GlmU from Pseudoalteromonas translucida (strain TAC 125).